We begin with the raw amino-acid sequence, 466 residues long: Histidine--tRNA ligase (466 aa).

It belongs to the class-II aminoacyl-tRNA synthetase family. As to quaternary structure, homodimer.

Its subcellular location is the cytoplasm. It carries out the reaction tRNA(His) + L-histidine + ATP = L-histidyl-tRNA(His) + AMP + diphosphate + H(+). The sequence is that of Histidine--tRNA ligase (hisS) from Bifidobacterium longum (strain NCC 2705).